The primary structure comprises 187 residues: Putative adenylate kinase (187 aa).

ATP contacts are provided by Gly-10, Gly-12, Lys-13, Thr-14, and Ile-15. An NMP region spans residues 30–53; sequence SLSQFVIENKLYTEYDELRQSYII. The interval 103–113 is LID; the sequence is GRGWADIKVAE. Residue Arg-104 participates in ATP binding.

The protein belongs to the adenylate kinase family. AK6 subfamily. Interacts with uS11. Not a structural component of 40S pre-ribosomes, but transiently interacts with them by binding to uS11.

The catalysed reaction is AMP + ATP = 2 ADP. The enzyme catalyses ATP + H2O = ADP + phosphate + H(+). Functionally, broad-specificity nucleoside monophosphate (NMP) kinase that catalyzes the reversible transfer of the terminal phosphate group between nucleoside triphosphates and monophosphates. Also has ATPase activity. Involved in the late maturation steps of the 30S ribosomal particles, specifically 16S rRNA maturation. While NMP activity is not required for ribosome maturation, ATPase activity is. Associates transiently with small ribosomal subunit protein uS11. ATP hydrolysis breaks the interaction with uS11. May temporarily remove uS11 from the ribosome to enable a conformational change of the ribosomal RNA that is needed for the final maturation step of the small ribosomal subunit. This chain is Putative adenylate kinase, found in Saccharolobus islandicus (strain L.S.2.15 / Lassen #1) (Sulfolobus islandicus).